The primary structure comprises 86 residues: Large ribosomal subunit protein eL43 (86 aa).

The C4-type zinc finger occupies 38 to 59; it reads CPVCGRKAVRRISTGIWQCQKC.

This sequence belongs to the eukaryotic ribosomal protein eL43 family. It depends on Zn(2+) as a cofactor.

The sequence is that of Large ribosomal subunit protein eL43 from Thermococcus onnurineus (strain NA1).